A 710-amino-acid chain; its full sequence is Cleavage and polyadenylation factor complex subunit C74.02c (710 aa).

The segment covering 1–30 has biased composition (polar residues); sequence MDNWNSVRNVSSDRQTSKTSENPPHTSNEY. Disordered regions lie at residues 1-42, 85-170, and 361-510; these read MDNW…LSPD, ASSN…SDVN, and GPAM…SVSW. The span at 86–108 shows a compositional bias: low complexity; it reads SSNPSLISSGSSQTGSPSQSLSS. The segment covering 109–170 has biased composition (polar residues); it reads NKEPSSPGIS…EVPSSKSDVN (62 aa). Composition is skewed to low complexity over residues 361-383 and 401-420; these read GPAMAPSASNKPSASSTTKSSNS and LASSTKPTSASSSTKAPLTK. Residues 421–430 show a composition bias toward polar residues; it reads QQTNPSTPLS. Basic and acidic residues predominate over residues 437–447; sequence KGREKEKDKDS.

As to quaternary structure, component of the cleavage and polyadenylation factor (CPF) complex.

The protein resides in the cytoplasm. It localises to the nucleus. Functionally, RNA-binding component of the cleavage and polyadenylation factor (CPF) complex, which plays a key role in polyadenylation-dependent pre-mRNA 3'-end formation. Involved in poly(A) site recognition. May be involved in coupling transcription termination and mRNA 3'-end formation. The polypeptide is Cleavage and polyadenylation factor complex subunit C74.02c (Schizosaccharomyces pombe (strain 972 / ATCC 24843) (Fission yeast)).